A 178-amino-acid chain; its full sequence is Large ribosomal subunit protein uL16 (178 aa).

Belongs to the universal ribosomal protein uL16 family.

This Saccharolobus islandicus (strain Y.N.15.51 / Yellowstone #2) (Sulfolobus islandicus) protein is Large ribosomal subunit protein uL16.